A 101-amino-acid chain; its full sequence is Small integral membrane protein 14 (101 aa).

The segment covering 71–81 (SDRRTADDAAI) has biased composition (basic and acidic residues). Residues 71 to 101 (SDRRTADDAAIEKPTGSSDDNTPPPPPPSAM) are disordered. Positions 92–101 (TPPPPPPSAM) are enriched in pro residues.

The polypeptide is Small integral membrane protein 14 (Caenorhabditis elegans).